The chain runs to 126 residues: Aspartate 1-decarboxylase (126 aa).

The Schiff-base intermediate with substrate; via pyruvic acid role is filled by serine 25. Serine 25 is modified (pyruvic acid (Ser)). Threonine 57 is a substrate binding site. Tyrosine 58 (proton donor) is an active-site residue. Glycine 73 to alanine 75 serves as a coordination point for substrate.

The protein belongs to the PanD family. As to quaternary structure, heterooctamer of four alpha and four beta subunits. Requires pyruvate as cofactor. Post-translationally, is synthesized initially as an inactive proenzyme, which is activated by self-cleavage at a specific serine bond to produce a beta-subunit with a hydroxyl group at its C-terminus and an alpha-subunit with a pyruvoyl group at its N-terminus.

The protein localises to the cytoplasm. It carries out the reaction L-aspartate + H(+) = beta-alanine + CO2. Its pathway is cofactor biosynthesis; (R)-pantothenate biosynthesis; beta-alanine from L-aspartate: step 1/1. Functionally, catalyzes the pyruvoyl-dependent decarboxylation of aspartate to produce beta-alanine. The sequence is that of Aspartate 1-decarboxylase from Acidovorax ebreus (strain TPSY) (Diaphorobacter sp. (strain TPSY)).